The primary structure comprises 445 residues: Glycine--tRNA ligase (445 aa).

Substrate-binding residues include Arg97 and Glu145. Residues 177 to 179 (RNE), 187 to 192 (FRTCEF), 262 to 263 (EV), and 308 to 311 (GLTR) contribute to the ATP site. 192-196 (FEQME) serves as a coordination point for substrate. 304 to 308 (ETSAG) is a substrate binding site.

It belongs to the class-II aminoacyl-tRNA synthetase family. In terms of assembly, homodimer.

The protein resides in the cytoplasm. It catalyses the reaction tRNA(Gly) + glycine + ATP = glycyl-tRNA(Gly) + AMP + diphosphate. Its function is as follows. Catalyzes the attachment of glycine to tRNA(Gly). The sequence is that of Glycine--tRNA ligase from Borreliella burgdorferi (strain ZS7) (Borrelia burgdorferi).